The primary structure comprises 217 residues: Thymidylate kinase (217 aa).

7–14 (GIDGAGKS) contacts ATP.

This sequence belongs to the thymidylate kinase family.

The catalysed reaction is dTMP + ATP = dTDP + ADP. Its function is as follows. Phosphorylation of dTMP to form dTDP in both de novo and salvage pathways of dTTP synthesis. The chain is Thymidylate kinase from Chlorobaculum parvum (strain DSM 263 / NCIMB 8327) (Chlorobium vibrioforme subsp. thiosulfatophilum).